The sequence spans 868 residues: MQEKYHPQEIEQQARQSWQETGIFNTTEIPDKPKYYCLSMFPYPSGKLHMGHVRNYTIGDVLSRYRRMQGYNVMQPMGWDAFGLPAENAAIQKGVPPAKWTYDNIAYMRSQLQSLGLAIDWKRELATCDPEYYRWNQWLFLRMLEKGIAYQKTQVVNWDPVDQTVLANEQVIDGCGWRTGAVVEKREIPGYYLAITRYADELLAGLENLPGWPERVKAMQANWIGKSYGVDIIFSPDIASGMPQALKVFTTRADTLMGATYVAVAAEHPVALYAAQNQPKLAAFIESCRQGATMEAELALQEKKGMATGLYVLHPLTGERLPVWVANYVLMSYGEGAVMAVPAHDERDFDFARQYALPIRPVIKPEDGELPAPLAQAFTGYGVTFDSGEFSSLKSMDAVDAIATKLKLEEQGEKRVRYRLRDWGISRQRYWGCPIPLVHCDQCGVVPVPDDQLPVTLPEDLVPDGSGNPLTKTPSFYECTCPRCGQQAHRETDTMDTFVDSSWYFIRYACQDQQAAMTDQRANYWLPVDQYIGGIEHAILHLLYSRFWSKVMRDLGLVSFDEPFANLLTQGMVLNEIFFRKTGNGRIQYFNPVEVDVQYDAEGKKIGAVLQADGQPVESGGIGTMSKSKNNGIDPQEIIEQYGADTARLFMMFASPPTQTLEWSDAGVEGAFRFLKRLWRQVYLHRQQGSDMSATDAIPHLEYPADLRDLRCQLHQTIVKVTDDLERRHTFNTAIAAVMELMNKLAGVQDISPAARQLMQEALENSVLLLSPIVPHICHILWRELRPGTELLDQPWPQADEQALIQDEIEIVVQINGKLRGQIRIAREADQATIERIALEHEHVQRNIAGQPIRKVVIVPGRLVNIVV.

The 'HIGH' region signature appears at 42-52 (PYPSGKLHMGH). The short motif at 624-628 (TMSKS) is the 'KMSKS' region element. Lys-627 lines the ATP pocket.

This sequence belongs to the class-I aminoacyl-tRNA synthetase family.

It is found in the cytoplasm. It carries out the reaction tRNA(Leu) + L-leucine + ATP = L-leucyl-tRNA(Leu) + AMP + diphosphate. This Nitrosomonas eutropha (strain DSM 101675 / C91 / Nm57) protein is Leucine--tRNA ligase.